A 266-amino-acid polypeptide reads, in one-letter code: 3-methyl-2-oxobutanoate hydroxymethyltransferase 2 (266 aa).

Mg(2+)-binding residues include D45 and D84. 3-methyl-2-oxobutanoate is bound by residues 45–46 (DS), D84, and K112. E114 serves as a coordination point for Mg(2+). The active-site Proton acceptor is E181.

Belongs to the PanB family. Homodecamer; pentamer of dimers. Mg(2+) is required as a cofactor.

The protein resides in the cytoplasm. The catalysed reaction is 3-methyl-2-oxobutanoate + (6R)-5,10-methylene-5,6,7,8-tetrahydrofolate + H2O = 2-dehydropantoate + (6S)-5,6,7,8-tetrahydrofolate. It functions in the pathway cofactor biosynthesis; (R)-pantothenate biosynthesis; (R)-pantoate from 3-methyl-2-oxobutanoate: step 1/2. Its function is as follows. Catalyzes the reversible reaction in which hydroxymethyl group from 5,10-methylenetetrahydrofolate is transferred onto alpha-ketoisovalerate to form ketopantoate. This Pseudomonas aeruginosa (strain ATCC 15692 / DSM 22644 / CIP 104116 / JCM 14847 / LMG 12228 / 1C / PRS 101 / PAO1) protein is 3-methyl-2-oxobutanoate hydroxymethyltransferase 2.